The chain runs to 580 residues: Acyl-coenzyme A synthetase ACSM3, mitochondrial (580 aa).

The N-terminal 21 residues, 1–21 (MAMLLRARCFHRLAIPDPRRI), are a transit peptide targeting the mitochondrion. 2 positions are modified to N6-succinyllysine: Lys67 and Lys100. N6-acetyllysine is present on Lys151. Residues 229–237 (TSGTTGPPK), 368–373 (EGYGQT), Asp455, Arg470, and Lys566 each bind ATP.

It belongs to the ATP-dependent AMP-binding enzyme family. Mg(2+) serves as cofactor. Requires Mn(2+) as cofactor.

It is found in the mitochondrion. The protein localises to the mitochondrion matrix. It carries out the reaction a medium-chain fatty acid + ATP + CoA = a medium-chain fatty acyl-CoA + AMP + diphosphate. The enzyme catalyses propanoate + ATP + CoA = propanoyl-CoA + AMP + diphosphate. The catalysed reaction is butanoate + ATP + CoA = butanoyl-CoA + AMP + diphosphate. It catalyses the reaction 2-methylpropanoate + ATP + CoA = 2-methylpropanoyl-CoA + AMP + diphosphate. It carries out the reaction 2-methylbutanoate + ATP + CoA = 2-methylbutanoyl-CoA + AMP + diphosphate. The enzyme catalyses octanoate + ATP + CoA = octanoyl-CoA + AMP + diphosphate. Its function is as follows. Catalyzes the activation of fatty acids by CoA to produce an acyl-CoA, the first step in fatty acid metabolism. Capable of activating medium-chain fatty acids with a preference for isobutyrate among fatty acids with 2-6 carbon atoms. The protein is Acyl-coenzyme A synthetase ACSM3, mitochondrial (Acsm3) of Rattus norvegicus (Rat).